Here is a 266-residue protein sequence, read N- to C-terminus: Thymidylate synthase (266 aa).

Arginine 24 contributes to the dUMP binding site. Residue histidine 54 participates in (6R)-5,10-methylene-5,6,7,8-tetrahydrofolate binding. Arginine 129–arginine 130 contacts dUMP. The Nucleophile role is filled by cysteine 149. DUMP is bound by residues arginine 169–aspartate 172, asparagine 180, and histidine 210–tyrosine 212. Aspartate 172 lines the (6R)-5,10-methylene-5,6,7,8-tetrahydrofolate pocket. Alanine 265 serves as a coordination point for (6R)-5,10-methylene-5,6,7,8-tetrahydrofolate.

This sequence belongs to the thymidylate synthase family. Bacterial-type ThyA subfamily. As to quaternary structure, homodimer.

The protein resides in the cytoplasm. It carries out the reaction dUMP + (6R)-5,10-methylene-5,6,7,8-tetrahydrofolate = 7,8-dihydrofolate + dTMP. It participates in pyrimidine metabolism; dTTP biosynthesis. Its function is as follows. Catalyzes the reductive methylation of 2'-deoxyuridine-5'-monophosphate (dUMP) to 2'-deoxythymidine-5'-monophosphate (dTMP) while utilizing 5,10-methylenetetrahydrofolate (mTHF) as the methyl donor and reductant in the reaction, yielding dihydrofolate (DHF) as a by-product. This enzymatic reaction provides an intracellular de novo source of dTMP, an essential precursor for DNA biosynthesis. The chain is Thymidylate synthase from Mycobacterium avium (strain 104).